The primary structure comprises 389 residues: Acetylornithine deacetylase (389 aa).

H85 contacts Zn(2+). The active site involves D87. D117 contacts Zn(2+). E149 is a catalytic residue. Residues E150, E174, and H360 each contribute to the Zn(2+) site.

It belongs to the peptidase M20A family. ArgE subfamily. As to quaternary structure, homodimer. It depends on Zn(2+) as a cofactor. The cofactor is Co(2+). Requires glutathione as cofactor.

It is found in the cytoplasm. The catalysed reaction is N(2)-acetyl-L-ornithine + H2O = L-ornithine + acetate. It functions in the pathway amino-acid biosynthesis; L-arginine biosynthesis; L-ornithine from N(2)-acetyl-L-ornithine (linear): step 1/1. Functionally, catalyzes the hydrolysis of the amide bond of N(2)-acetylated L-amino acids. Cleaves the acetyl group from N-acetyl-L-ornithine to form L-ornithine, an intermediate in L-arginine biosynthesis pathway, and a branchpoint in the synthesis of polyamines. The chain is Acetylornithine deacetylase from Yersinia pseudotuberculosis serotype O:1b (strain IP 31758).